The sequence spans 277 residues: Large ribosomal subunit protein uL2 (277 aa).

Residues 199–277 (DHMNTSIGKA…ILLSRHKRKK (79 aa)) are disordered. The segment covering 209 to 220 (GRNRWLGRKPHN) has biased composition (basic residues).

It belongs to the universal ribosomal protein uL2 family. Part of the 50S ribosomal subunit. Forms a bridge to the 30S subunit in the 70S ribosome.

Its function is as follows. One of the primary rRNA binding proteins. Required for association of the 30S and 50S subunits to form the 70S ribosome, for tRNA binding and peptide bond formation. It has been suggested to have peptidyltransferase activity; this is somewhat controversial. Makes several contacts with the 16S rRNA in the 70S ribosome. The protein is Large ribosomal subunit protein uL2 of Bradyrhizobium diazoefficiens (strain JCM 10833 / BCRC 13528 / IAM 13628 / NBRC 14792 / USDA 110).